We begin with the raw amino-acid sequence, 141 residues long: Large ribosomal subunit protein uL11 (141 aa).

The protein belongs to the universal ribosomal protein uL11 family. In terms of assembly, part of the ribosomal stalk of the 50S ribosomal subunit. Interacts with L10 and the large rRNA to form the base of the stalk. L10 forms an elongated spine to which L12 dimers bind in a sequential fashion forming a multimeric L10(L12)X complex. In terms of processing, one or more lysine residues are methylated.

In terms of biological role, forms part of the ribosomal stalk which helps the ribosome interact with GTP-bound translation factors. The polypeptide is Large ribosomal subunit protein uL11 (Synechococcus sp. (strain RCC307)).